A 542-amino-acid chain; its full sequence is MAELDQLPDESSSAKALVSLKEGSLSNTWNEKYSSLQKTPVWKGRNTSSAVEMPFRNSKRSRLFSDEDDRQINTRSPKRNQRVAMVPQKFTATMSTPDKKASQKIGFRLRNLLKLPKAHKWCIYEWFYSNIDKPLFEGDNDFCVCLKESFPNLKTRKLTRVEWGKIRRLMGKPRRCSSAFFEEERSALKQKRQKIRLLQQRKVADVSQFKDLPDEIPLPLVIGTKVTARLRGVHDGLFTGQIDAVDTLNATYRVTFDRTGLGTHTIPDYEVLSNEPHETMPIAAFGQKQRPSRFFMTPPRLHYTPPLQSPIIDNDPLLGQSPWRSKISGSDTETLGGFPVEFLIQVTRLSKILMIKKEHIKKLREMNTEAEKLKSYSMPISIEFQRRYATIVLELEQLNKDLNKVLHKVQQYCYELAPDQGLQPADQPTDMRRRCEEEAQEIVRHANSSTGQPCVENENLTDLISRLTAILLQIKCLAEGGDLNSFEFKSLTDSLNDIKSTIDASNISCFQNNVEIHVAHIQSGLSQMGNLHAFAANNTNRD.

Alanine 2 carries the N-acetylalanine modification. The sufficient for interaction with RB1 stretch occupies residues 2-296; it reads AELDQLPDES…QKQRPSRFFM (295 aa). Lysine 21 is covalently cross-linked (Glycyl lysine isopeptide (Lys-Gly) (interchain with G-Cter in SUMO2)). 2 positions are modified to phosphoserine: serine 65 and serine 95. A phosphothreonine mark is found at threonine 96 and threonine 304. Serine 309 and serine 321 each carry phosphoserine. Positions 354–413 form a coiled coil; sequence MIKKEHIKKLREMNTEAEKLKSYSMPISIEFQRRYATIVLELEQLNKDLNKVLHKVQQYC.

This sequence belongs to the lin-9 family. Component of the DREAM complex (also named LINC complex) at least composed of E2F4, E2F5, LIN9, LIN37, LIN52, LIN54, MYBL1, MYBL2, RBL1, RBL2, RBBP4, TFDP1 and TFDP2. The complex exists in quiescent cells where it represses cell cycle-dependent genes. It dissociates in S phase when LIN9, LIN37, LIN52 and LIN54 form a subcomplex that binds to MYBL2. Interacts with RB1. In terms of tissue distribution, expressed in thymus and testis.

Its subcellular location is the nucleus. The protein localises to the nucleoplasm. Its function is as follows. Acts as a tumor suppressor. Inhibits DNA synthesis. Its ability to inhibit oncogenic transformation is mediated through its association with RB1. Plays a role in the expression of genes required for the G1/S transition. The polypeptide is Protein lin-9 homolog (LIN9) (Homo sapiens (Human)).